The primary structure comprises 567 residues: Serine/threonine-protein kinase SSN3 (567 aa).

The region spanning 68–470 is the Protein kinase domain; it reads YEIIGYIAAG…AINALDHSYF (403 aa). 74–82 serves as a coordination point for ATP; sequence IAAGTYGKV. The disordered stretch occupies residues 88-179; that stretch reads RQSSKSSSST…RNSENTDNRR (92 aa). Low complexity predominate over residues 90–101; that stretch reads SSKSSSSTGSDS. Composition is skewed to polar residues over residues 102 to 122 and 133 to 150; these read LAQD…QNAG and PNSN…ELST. Residues 167–179 are compositionally biased toward basic and acidic residues; it reads GDKRNSENTDNRR. Lys-190 provides a ligand contact to ATP. The active-site Proton acceptor is Asp-293. Over residues 546 to 556 the composition is skewed to low complexity; it reads AVSGNSSSQSS. The tract at residues 546–567 is disordered; it reads AVSGNSSSQSSRNMEPMKKKRK.

It belongs to the protein kinase superfamily. CMGC Ser/Thr protein kinase family. CDC2/CDKX subfamily. Component of the SRB8-11 complex, a regulatory module of the Mediator complex. Mg(2+) serves as cofactor.

It is found in the nucleus. The catalysed reaction is L-seryl-[protein] + ATP = O-phospho-L-seryl-[protein] + ADP + H(+). The enzyme catalyses L-threonyl-[protein] + ATP = O-phospho-L-threonyl-[protein] + ADP + H(+). It catalyses the reaction [DNA-directed RNA polymerase] + ATP = phospho-[DNA-directed RNA polymerase] + ADP + H(+). Its function is as follows. Component of the SRB8-11 complex. The SRB8-11 complex is a regulatory module of the Mediator complex which is itself involved in regulation of basal and activated RNA polymerase II-dependent transcription. The SRB8-11 complex may be involved in the transcriptional repression of a subset of genes regulated by Mediator. It may inhibit the association of the Mediator complex with RNA polymerase II to form the holoenzyme complex. The SRB8-11 complex phosphorylates the C-terminal domain (CTD) of the largest subunit of RNA polymerase II. The polypeptide is Serine/threonine-protein kinase SSN3 (SSN3) (Candida glabrata (strain ATCC 2001 / BCRC 20586 / JCM 3761 / NBRC 0622 / NRRL Y-65 / CBS 138) (Yeast)).